We begin with the raw amino-acid sequence, 345 residues long: Aurora kinase B (345 aa).

The interval 1–25 (MAQKENAYPWPYGSKTSQSGLNTLS) is disordered. A compositionally biased stretch (polar residues) spans 14-25 (SKTSQSGLNTLS). Phosphothreonine is present on T35. Residues 50–77 (TAAPGQKLAENKSQGSTASQGSQNKQPF) are disordered. Polar residues predominate over residues 60–77 (NKSQGSTASQGSQNKQPF). Phosphoserine is present on S62. The region spanning 82 to 332 (FEIGRPLGKG…LAEVAAHPWV (251 aa)) is the Protein kinase domain. ATP-binding positions include 88–96 (LGKGKFGNV) and K111. D205 (proton acceptor) is an active-site residue. An N6-acetyllysine modification is found at K220. S232 bears the Phosphoserine mark. The residue at position 237 (T237) is a Phosphothreonine; by autocatalysis.

Belongs to the protein kinase superfamily. Ser/Thr protein kinase family. Aurora subfamily. As to quaternary structure, component of the chromosomal passenger complex (CPC) composed of at least BIRC5/survivin, CDCA8/borealin, INCENP, AURKB or AURKC; predominantly independent AURKB- and AURKC-containing complexes exist. Associates with RACGAP1 during M phase. Interacts with SPDYC; this interaction may be required for proper localization of active, Thr-237-phosphorylated AURKB form during prometaphase and metaphase. Interacts with p53/TP53. Interacts (via the middle kinase domain) with NOC2L (via the N- and C-terminus domains). Interacts with CDCA1. Interacts with EVI5. Interacts with JTB. Interacts with NDC80. Interacts with PSMA3. Interacts with RNF2/RING1B. Interacts with SEPTIN1. Interacts with SIRT2. Interacts with TACC1. Interacts with TTC28. In terms of processing, the phosphorylation of Thr-237 requires the binding to INCENP and occurs by means of an autophosphorylation mechanism. Thr-237 phosphorylation is indispensable for the AURKB kinase activity. Post-translationally, acetylated at Lys-220 by KAT5 at kinetochores, increasing AURKB activity and promoting accurate chromosome segregation in mitosis. Ubiquitinated by different BCR (BTB-CUL3-RBX1) E3 ubiquitin ligase complexes. Ubiquitinated by the BCR(KLHL9-KLHL13) E3 ubiquitin ligase complex, ubiquitination leads to removal from mitotic chromosomes and is required for cytokinesis. During anaphase, the BCR(KLHL21) E3 ubiquitin ligase complex recruits the CPC complex from chromosomes to the spindle midzone and mediates the ubiquitination of AURKB. Ubiquitination of AURKB by BCR(KLHL21) E3 ubiquitin ligase complex may not lead to its degradation by the proteasome. Deubiquitinated by USP35; inhibiting CDH1-mediated degradation of AURKB. In terms of tissue distribution, expressed in testis, intestine and spleen. All of them are tissues that contain a large number of proliferating cells. Expressed during S phase, in a cell-cycle-dependent fashion.

The protein resides in the nucleus. It localises to the chromosome. It is found in the centromere. Its subcellular location is the kinetochore. The protein localises to the cytoplasm. The protein resides in the cytoskeleton. It localises to the spindle. It is found in the midbody. The catalysed reaction is L-seryl-[protein] + ATP = O-phospho-L-seryl-[protein] + ADP + H(+). The enzyme catalyses L-threonyl-[protein] + ATP = O-phospho-L-threonyl-[protein] + ADP + H(+). Its activity is regulated as follows. Activity is greatly increased when AURKB is within the CPC complex. In particular, AURKB-phosphorylated INCENP acts as an activator of AURKB. Positive feedback between HASPIN and AURKB contributes to CPC localization. Serine/threonine-protein kinase component of the chromosomal passenger complex (CPC), a complex that acts as a key regulator of mitosis. The CPC complex has essential functions at the centromere in ensuring correct chromosome alignment and segregation and is required for chromatin-induced microtubule stabilization and spindle assembly. Involved in the bipolar attachment of spindle microtubules to kinetochores and is a key regulator for the onset of cytokinesis during mitosis. Required for central/midzone spindle assembly and cleavage furrow formation. Key component of the cytokinesis checkpoint, a process required to delay abscission to prevent both premature resolution of intercellular chromosome bridges and accumulation of DNA damage: phosphorylates CHMP4C, leading to retain abscission-competent VPS4 (VPS4A and/or VPS4B) at the midbody ring until abscission checkpoint signaling is terminated at late cytokinesis. AURKB phosphorylates the CPC complex subunits BIRC5/survivin, CDCA8/borealin and INCENP. Phosphorylation of INCENP leads to increased AURKB activity. Other known AURKB substrates involved in centromeric functions and mitosis are CENPA, DES/desmin, GPAF, KIF2C, NSUN2, RACGAP1, SEPTIN1, VIM/vimentin, HASPIN, and histone H3. A positive feedback loop involving HASPIN and AURKB contributes to localization of CPC to centromeres. Phosphorylation of VIM controls vimentin filament segregation in cytokinetic process, whereas histone H3 is phosphorylated at 'Ser-10' and 'Ser-28' during mitosis (H3S10ph and H3S28ph, respectively). AURKB is also required for kinetochore localization of BUB1 and SGO1. Phosphorylation of p53/TP53 negatively regulates its transcriptional activity. Key regulator of active promoters in resting B- and T-lymphocytes: acts by mediating phosphorylation of H3S28ph at active promoters in resting B-cells, inhibiting RNF2/RING1B-mediated ubiquitination of histone H2A and enhancing binding and activity of the USP16 deubiquitinase at transcribed genes. Acts as an inhibitor of CGAS during mitosis: catalyzes phosphorylation of the N-terminus of CGAS during the G2-M transition, blocking CGAS liquid phase separation and activation, and thereby preventing CGAS-induced autoimmunity. Phosphorylates KRT5 during anaphase and telophase. Phosphorylates ATXN10 which promotes phosphorylation of ATXN10 by PLK1 and may play a role in the regulation of cytokinesis and stimulating the proteasomal degradation of ATXN10. This chain is Aurora kinase B (Aurkb), found in Mus musculus (Mouse).